A 475-amino-acid polypeptide reads, in one-letter code: Chromosomal replication initiator protein DnaA (475 aa).

A domain I, interacts with DnaA modulators region spans residues 1-73 (MTNSEQERWS…LSCWQAEMPE (73 aa)). The domain II stretch occupies residues 73–131 (EVHRIDLSVRTAMRCATPAKEAPVAVEARRAERGDAKPADTRAPVMTPVAASHDALGGS). Residues 132 to 354 (PLDPRLTFAS…GAINRLLAHS (223 aa)) form a domain III, AAA+ region region. ATP is bound by residues G179, G181, K182, and T183. Positions 355–475 (KLNNQPVTLD…VEALKRQLQD (121 aa)) are domain IV, binds dsDNA.

Belongs to the DnaA family. As to quaternary structure, oligomerizes as a right-handed, spiral filament on DNA at oriC.

It is found in the cytoplasm. Plays an essential role in the initiation and regulation of chromosomal replication. ATP-DnaA binds to the origin of replication (oriC) to initiate formation of the DNA replication initiation complex once per cell cycle. Binds the DnaA box (a 9 base pair repeat at the origin) and separates the double-stranded (ds)DNA. Forms a right-handed helical filament on oriC DNA; dsDNA binds to the exterior of the filament while single-stranded (ss)DNA is stabiized in the filament's interior. The ATP-DnaA-oriC complex binds and stabilizes one strand of the AT-rich DNA unwinding element (DUE), permitting loading of DNA polymerase. After initiation quickly degrades to an ADP-DnaA complex that is not apt for DNA replication. Binds acidic phospholipids. This is Chromosomal replication initiator protein DnaA from Bradyrhizobium sp. (strain BTAi1 / ATCC BAA-1182).